The sequence spans 256 residues: MYPTKFRRGVSYSQRRFVSRNQSSKRGTFVRRTDGKRRKGPSSKAHDEPKMKLQRIHENQYGPEFVMTHNSALSTFINFPVLGKIEPNRSRSYIKLNRLSFKGTVKIERVHADVNMDGVISKIEGVFSLVIVVDRKPHLSSTGGLHTFDEIFGARIHSHGNLAITPGLKDRYYVLHVLKRVLSVEKDTLMVDLEGSTTISNRRYNCWASFNDLEHDLCNGVYANISKNAILVYYCWMSDAMSKASTFVSYDLDYLG.

The segment at 18-50 (VSRNQSSKRGTFVRRTDGKRRKGPSSKAHDEPK) is disordered. The Bipartite nuclear localization signal motif lies at 21–42 (NQSSKRGTFVRRTDGKRRKGPS). The short motif at 81-96 (VLGKIEPNRSRSYIKL) is the Nuclear localization signal element. The interval 150–187 (EIFGARIHSHGNLAITPGLKDRYYVLHVLKRVLSVEKD) is interaction with Arabidopsis thaliana NSI protein.

This sequence belongs to the begomovirus nuclear shuttle protein family. In terms of assembly, binds to single-stranded and double-stranded viral DNA. Interacts with the host nuclear shuttle interacting (NSI) protein. This interaction may allow NSP to recruit NSI monomers to the viral genome and thus regulate nuclear export of viral genome by NSP.

It is found in the host nucleus. The protein resides in the host cytoplasm. The protein localises to the host cell membrane. Functionally, binds to the genomic viral ssDNA, shuttles it into and out of the cell nucleus. Begomoviruses use 2 proteins to transport their DNA from cell to cell. The nuclear shuttle protein (NSP) shuttles it between nucleus and cytoplasm and the movement protein (MP) probably transports the DNA-NSP complex to the cell periphery and facilitates movement across the cell wall. The chain is Nuclear shuttle protein from Brassica oleracea (Wild cabbage).